Consider the following 250-residue polypeptide: Ribonuclease PH (250 aa).

Phosphate-binding positions include Arg86 and 124–126 (GTR).

Belongs to the RNase PH family. In terms of assembly, homohexameric ring arranged as a trimer of dimers.

The catalysed reaction is tRNA(n+1) + phosphate = tRNA(n) + a ribonucleoside 5'-diphosphate. Phosphorolytic 3'-5' exoribonuclease that plays an important role in tRNA 3'-end maturation. Removes nucleotide residues following the 3'-CCA terminus of tRNAs; can also add nucleotides to the ends of RNA molecules by using nucleoside diphosphates as substrates, but this may not be physiologically important. Probably plays a role in initiation of 16S rRNA degradation (leading to ribosome degradation) during starvation. This is Ribonuclease PH from Exiguobacterium sibiricum (strain DSM 17290 / CCUG 55495 / CIP 109462 / JCM 13490 / 255-15).